The following is a 131-amino-acid chain: Transcription antitermination protein NusB (131 aa).

It belongs to the NusB family.

Involved in transcription antitermination. Required for transcription of ribosomal RNA (rRNA) genes. Binds specifically to the boxA antiterminator sequence of the ribosomal RNA (rrn) operons. The chain is Transcription antitermination protein NusB from Bacillus subtilis (strain 168).